A 790-amino-acid polypeptide reads, in one-letter code: B3 domain-containing transcription repressor VAL1 (790 aa).

The disordered stretch occupies residues 234 to 260 (KPSRPAISTPPVASKSAQARIGRPPVE). A DNA-binding region (TF-B3) is located at residues 295–396 (FEKTLSASDA…KLIMGSRKAA (102 aa)). Disordered regions lie at residues 400 to 429 (DMQGCGLTNGTSTEDTSSSGVTENPPSING) and 446 to 468 (NLNSETNGGRIGDDPTRVKEKKR). Positions 405–429 (GLTNGTSTEDTSSSGVTENPPSING) are enriched in polar residues. The CW-type zinc-finger motif lies at 538–588 (SGEQERWATCDDCSKWRRLPVDALLSFKWTCIDNVWDVSRCSCSAPEESLK). Residues cysteine 547, cysteine 550, cysteine 568, and cysteine 580 each coordinate Zn(2+). A coiled-coil region spans residues 685-732 (LMMRRKKKQLERDVTAAEDKKKKDMELAESDKSKEEKEVNTARIDLNS). The tract at residues 689 to 737 (RKKKQLERDVTAAEDKKKKDMELAESDKSKEEKEVNTARIDLNSDPYNK) is disordered. Basic and acidic residues predominate over residues 694–724 (LERDVTAAEDKKKKDMELAESDKSKEEKEVN).

In terms of assembly, interacts with SNL1. In terms of tissue distribution, expressed in flowers and at lower levels in roots, stems and leaves.

Its subcellular location is the nucleus. Transcriptional repressor of gene expression involved in embryonic pathways, such as LEC1, ABI3, and FUS3. Repressor of the sugar-inducible genes involved in the seed maturation program in seedlings. Plays an essential role in regulating the transition from seed maturation to seedling growth. Functionally redundant with VAL2/HSL1. The chain is B3 domain-containing transcription repressor VAL1 (VAL1) from Arabidopsis thaliana (Mouse-ear cress).